The chain runs to 143 residues: MIIKTKYHGETQIQEDQTIVFKNGLPGFTGEKKFVILPLSEDSPFVVLQSVQSEELAFIVASPFVFFKDYGFDLDETTVELLEIESAEDVEVMAILTIEEPFEKSTANLMAPIVVNRRKMLAKQVILHDSSYLTKQPIGGEAC.

This sequence belongs to the FliW family. As to quaternary structure, interacts with translational regulator CsrA and flagellin(s).

It is found in the cytoplasm. In terms of biological role, acts as an anti-CsrA protein, binds CsrA and prevents it from repressing translation of its target genes, one of which is flagellin. Binds to flagellin and participates in the assembly of the flagellum. This Bacillus licheniformis (strain ATCC 14580 / DSM 13 / JCM 2505 / CCUG 7422 / NBRC 12200 / NCIMB 9375 / NCTC 10341 / NRRL NRS-1264 / Gibson 46) protein is Flagellar assembly factor FliW.